Here is a 665-residue protein sequence, read N- to C-terminus: Chaperone protein dnaK1 (665 aa).

T198 carries the phosphothreonine; by autocatalysis modification. The interval 634–665 is disordered; the sequence is DDPWDNQMNSNSRNSRYGNSRDDDPWDNDYFL. Residues 642–651 show a composition bias toward low complexity; sequence NSNSRNSRYG.

Belongs to the heat shock protein 70 family.

Functionally, acts as a chaperone. This Prochlorococcus marinus subsp. pastoris (strain CCMP1986 / NIES-2087 / MED4) protein is Chaperone protein dnaK1 (dnaK1).